We begin with the raw amino-acid sequence, 455 residues long: MHPQLHKCRQLMDAYIRQKRASPGMVQASDLQMSRPMSGMRGNSRELHAYDGPMQFIGSPHNPDQILSNNSSSVHLSSSMNSSRNNSNNLRSLSTINQEDLIEEISSHELEDEESSPVTVVENPLPPLSANSAHSQRLRNGQQSFNETLDEDDYANRNIAGVAPVRPAGIASPYKDGVAPEASNGVANGSNSGVGSAESEGDVIGSIDLFVMQPAPQGVLYKCRITRDRKGMDRGLFPIYYLHLERDYGKKIFLLGGRKRKKSKTSNYIVSCDPTDLSRNADGFCGKLRSNVFGTSFTVFDSGNKDSTESPRLDLAVIIYDTNILGFKGPRNMTVILPGMTEDDQRVKISSADPKQQGILDLWKMKNMDNIVELHNKTPVWNDETQSYVLNFHGRVTQASVKNFQLVHDSDPEYIVMQFGRTSEDVFTMDYRYPLCAMQAFAIALSSFDGKIACE.

The tract at residues 35-92 (RPMSGMRGNSRELHAYDGPMQFIGSPHNPDQILSNNSSSVHLSSSMNSSRNNSNNLRS) is disordered. Residues 67–92 (LSNNSSSVHLSSSMNSSRNNSNNLRS) show a composition bias toward low complexity. The residue at position 144 (S144) is a Phosphoserine.

Belongs to the TUB family.

It is found in the cytoplasm. It localises to the nucleus. The protein localises to the cell projection. The protein resides in the cilium membrane. Its subcellular location is the rhabdomere. The sequence is that of Protein king tubby from Drosophila virilis (Fruit fly).